A 144-amino-acid chain; its full sequence is Subtilase-type protease inhibitor (144 aa).

The N-terminal stretch at 1–35 (MRNTARWAATLGLTATAVCGPLAGASLASPATAPA) is a signal peptide. 2 cysteine pairs are disulfide-bonded: C66–C81 and C102–C132.

This sequence belongs to the protease inhibitor I16 (SSI) family. As to quaternary structure, homodimer.

Its subcellular location is the secreted. Strong inhibitory activity toward subtilisin BPN' and, to a lesser extent, toward trypsin. The polypeptide is Subtilase-type protease inhibitor (sti1) (Streptomyces coelicolor (strain ATCC BAA-471 / A3(2) / M145)).